The sequence spans 307 residues: Transmembrane and coiled-coil domain-containing protein 5B (307 aa).

Residues 20–212 (TLEAIKQNLK…SKAQNDSSQV (193 aa)) are a coiled coil. Residues 246–268 (YLFFMVMIVIRLLGYVFFHLQYV) form a helical membrane-spanning segment.

Belongs to the TMCO5 family.

Its subcellular location is the membrane. The chain is Transmembrane and coiled-coil domain-containing protein 5B (Tmco5b) from Mus musculus (Mouse).